The sequence spans 126 residues: Aspartate 1-decarboxylase (126 aa).

Serine 25 functions as the Schiff-base intermediate with substrate; via pyruvic acid in the catalytic mechanism. Serine 25 carries the post-translational modification Pyruvic acid (Ser). Substrate is bound at residue threonine 57. The Proton donor role is filled by tyrosine 58. 73-75 (GGA) is a substrate binding site.

This sequence belongs to the PanD family. In terms of assembly, heterooctamer of four alpha and four beta subunits. Pyruvate is required as a cofactor. Is synthesized initially as an inactive proenzyme, which is activated by self-cleavage at a specific serine bond to produce a beta-subunit with a hydroxyl group at its C-terminus and an alpha-subunit with a pyruvoyl group at its N-terminus.

The protein resides in the cytoplasm. The catalysed reaction is L-aspartate + H(+) = beta-alanine + CO2. Its pathway is cofactor biosynthesis; (R)-pantothenate biosynthesis; beta-alanine from L-aspartate: step 1/1. Catalyzes the pyruvoyl-dependent decarboxylation of aspartate to produce beta-alanine. This chain is Aspartate 1-decarboxylase, found in Stenotrophomonas maltophilia (strain R551-3).